The following is a 373-amino-acid chain: Cytoplasmic tRNA 2-thiolation protein 1 (373 aa).

This sequence belongs to the TtcA family. CTU1/NCS6/ATPBD3 subfamily.

Its subcellular location is the cytoplasm. Its pathway is tRNA modification; 5-methoxycarbonylmethyl-2-thiouridine-tRNA biosynthesis. Its function is as follows. Plays a central role in 2-thiolation of mcm(5)S(2)U at tRNA wobble positions of tRNA(Lys), tRNA(Glu) and tRNA(Gln). Directly binds tRNAs and probably acts by catalyzing adenylation of tRNAs, an intermediate required for 2-thiolation. It is unclear whether it acts as a sulfurtransferase that transfers sulfur from thiocarboxylated URM1 onto the uridine of tRNAs at wobble position. Prior mcm(5) tRNA modification by the elongator complex is required for 2-thiolation. May also be involved in protein urmylation. This is Cytoplasmic tRNA 2-thiolation protein 1 from Malassezia globosa (strain ATCC MYA-4612 / CBS 7966) (Dandruff-associated fungus).